Consider the following 391-residue polypeptide: MTQLFDTLGFIETSAVRAGAAARDAHGAHQEAATRADVAAVSLVHVGKVFATPRGHAAALRDVTFDVRRGEVFGIIGRSGAGKSTLLRLVNGLERPSSGSVRVQGVDVGALDEDGLVALRRRTGMVFQHFNLLSAKTVFENVALPLKIAGVPKAERTRKVDALLDLVGLAAKRDAYPASLSGGQKQRVGIARALVHDPEVLLCDEATSALDPETTQSILALLADINRRLGLTIVLITHEMEVIRAVCDTVAVIEQGELVETGPVWRVFGDPRHGATRALLSTLVHDLPAELAARVQPLPEQAALPDGAQVVLDVRYTGESGGEPDVGALAAALGGSVRFLHGGIERIQGHAQGRLVIAASPGQSLAHGGAVAALLERARRHANHAEVLGYV.

The region spanning 44–280 (VHVGKVFATP…PRHGATRALL (237 aa)) is the ABC transporter domain. Residue 77-84 (GRSGAGKS) participates in ATP binding.

The protein belongs to the ABC transporter superfamily. Methionine importer (TC 3.A.1.24) family. The complex is composed of two ATP-binding proteins (MetN), two transmembrane proteins (MetI) and a solute-binding protein (MetQ).

It localises to the cell inner membrane. It catalyses the reaction L-methionine(out) + ATP + H2O = L-methionine(in) + ADP + phosphate + H(+). The enzyme catalyses D-methionine(out) + ATP + H2O = D-methionine(in) + ADP + phosphate + H(+). Part of the ABC transporter complex MetNIQ involved in methionine import. Responsible for energy coupling to the transport system. The chain is Methionine import ATP-binding protein MetN 2 from Burkholderia ambifaria (strain ATCC BAA-244 / DSM 16087 / CCUG 44356 / LMG 19182 / AMMD) (Burkholderia cepacia (strain AMMD)).